Here is a 66-residue protein sequence, read N- to C-terminus: Ornithorhynchus venom defensin-like peptide A (66 aa).

Positions 1 to 22 are cleaved as a signal peptide; the sequence is MRLTYLLLLLVAVLFQAGSGSA. The propeptide occupies 23-24; the sequence is EP. Cystine bridges form between C33–C63, C40–C56, and C48–C64.

In terms of tissue distribution, produced by the crural gland and detected in venom from the spur located on each male hind leg. Is the only OvDLP that is expressed in venom gland alone.

The protein resides in the secreted. Its function is as follows. Does not show antimicrobial, myotoxic, hemolytic and cell-promoting activities. This Ornithorhynchus anatinus (Duckbill platypus) protein is Ornithorhynchus venom defensin-like peptide A.